A 396-amino-acid polypeptide reads, in one-letter code: Probable tRNA sulfurtransferase (396 aa).

Positions 63 to 166 (AAAARASARV…GRRAYFFDTI (104 aa)) constitute a THUMP domain. ATP is bound by residues 184–185 (LY), arginine 266, glycine 288, and glutamine 297.

Belongs to the ThiI family.

The protein resides in the cytoplasm. It catalyses the reaction [ThiI sulfur-carrier protein]-S-sulfanyl-L-cysteine + a uridine in tRNA + 2 reduced [2Fe-2S]-[ferredoxin] + ATP + H(+) = [ThiI sulfur-carrier protein]-L-cysteine + a 4-thiouridine in tRNA + 2 oxidized [2Fe-2S]-[ferredoxin] + AMP + diphosphate. The catalysed reaction is [ThiS sulfur-carrier protein]-C-terminal Gly-Gly-AMP + S-sulfanyl-L-cysteinyl-[cysteine desulfurase] + AH2 = [ThiS sulfur-carrier protein]-C-terminal-Gly-aminoethanethioate + L-cysteinyl-[cysteine desulfurase] + A + AMP + 2 H(+). The protein operates within cofactor biosynthesis; thiamine diphosphate biosynthesis. Catalyzes the ATP-dependent transfer of a sulfur to tRNA to produce 4-thiouridine in position 8 of tRNAs, which functions as a near-UV photosensor. Also catalyzes the transfer of sulfur to the sulfur carrier protein ThiS, forming ThiS-thiocarboxylate. This is a step in the synthesis of thiazole, in the thiamine biosynthesis pathway. The sulfur is donated as persulfide by IscS. The polypeptide is Probable tRNA sulfurtransferase (Aeropyrum pernix (strain ATCC 700893 / DSM 11879 / JCM 9820 / NBRC 100138 / K1)).